A 1570-amino-acid polypeptide reads, in one-letter code: MRIELRSWSSIAFLFTLFIAYVVSESNFKPDIKLTKEGEIAKEYNYFDDSSNILVLRKDKLAISFDDGVSWKNVKETENERVIRYQFDPFNNNRAFAFTIDKFQYVTNDKGETWSKFEIYDPKNEKEHLTLNSIPHILFNAKNPDLAIFVVYHCPEDKKISNQCVNYHFLTTDGFKSNPKSLQTDASICTFAKSTKSYDVGKDETIYCSRNKLNSFGHIVESYIVASDDFFKTESKINHALAKSGSIIDIRVLQNFAIVVVQNDKFNTKSKVSLLVSKDGKNFNEADLKVDISYGIMTFLESSSSSIFLAVMDYSNSFRKFSLSTVYSSDSSGLSFSKVLDKVQGGSIQKVETIDGVWLANIADEIKDNKGKSKTLLDMLMGGGIDKNIKSRISYNDGEDWNLLKINNDGSCTTESECSLHLLNPTEKSGDGKFVTGPTPGILLSVGNKGSKLEKDINRMNTWISRDGGISWDFALDEPCLFSFGDQGNIIVAIPYYGKNKMNSSNMYFSLDQGKSWENVALEIPIFPLTLTTTVDGTSQRFILSGLIDSTPKDKADYSFAETLYAIDFSKAFGGKKCDSKKDFEDIYTRLDPSNDKPICIYGHKEKFRRRKQNSQCFVNELFEDVKVYDDPCECTVIDFECASGFSRSKEKECKPDKKKLANICRDKKSKKISLPDKALASGNKCKNPKEAAKEFVKTKEFKCSDYLDEDDKDKNKGNKHDIVSTFNEFDSELQQYTYVEQGETYSGENIILRTKANVAYASNNGGVEFVKIPVSDEIVTYYPGLVPGQVILITDSEKFYFSIDGGNTFQKKTAPAKPNVIGARIISFDKKDTEKFIWYSSENCDNPFSRDCSLVAYITEDGGENFQKLKEDVRSCDFVADVFEDVSDEIKNMIYCTVEDKSSRKLMLLSSTDYFKQSKKVFDNVVGYAITGNFLVAATIDDAEQSLKAKVTVDGQIFADADFPPDFHVDSQQAYTVLDSASKAIFIHVTTNNENGHEFGSILKSNSNGTSYSLTLDKVNRNRIGYVDYDRIEGIEGVIVSNIVANDHSKDRKKLKTQITHNDGGEWSYITPPVIDSKGKKYKCNGKSLSKCSLNLHGFTERADYRDTFSSASAIGLMMAVGNVGEYLEDFDKCSTFISRDGGITWKEIKKGVYMWEYGDRGTILVLVNAEKTTDKLMYSLDEGDTWHDYKFAEEPIDVLDLATVPSDTSRKFLIFGKSDRKMVSYSIDFTNIHKRQCQLDLDNPNDDDFEYWSPTHPSTPDNCLFGREAKYLRRAIGHDDCFIGSAPLIEGFKVTRNCSCTRKDYECDYNFFRDSDDTCKLVKGLSPSNRKKEMCKKENAFEYFEPTGYRKIPLSTCVGGKNFDTWKVHPCPGKQKEFNKHHGKELNSGSLLAVIGIPIAVFLLATWFVYERGIRRNGGFKRFGQIRLDLDDDDFHPIENNEVDKAINKIVKGGIVIVAASIAGFKTLRKVDRMLFDKVTSSLFRRRPGHRNYVHVPEMDEEEELFGNFRDNYEEELEEGTNNINEDFNDEPNDYEYEEETNDEVDSRLFNIDDQSDEELQSATPEDN.

Residues 1–24 form the signal peptide; the sequence is MRIELRSWSSIAFLFTLFIAYVVS. Residues 25 to 1390 lie on the Lumenal side of the membrane; the sequence is ESNFKPDIKL…NKHHGKELNS (1366 aa). BNR repeat units follow at residues 63-72, 105-116, and 463-473; these read ISFDDGVSWK, YVTNDKGETWSK, and WISRDGGISWD. N-linked (GlcNAc...) asparagine glycosylation occurs at asparagine 503. BNR repeat units lie at residues 508–518, 801–812, and 858–869; these read YFSLDQGKSWE, YFSIDGGNTFQK, and YITEDGGENFQK. The N-linked (GlcNAc...) asparagine glycan is linked to asparagine 1009. 2 BNR repeats span residues 1138 to 1148 and 1179 to 1189; these read FISRDGGITWK and MYSLDEGDTWH. The N-linked (GlcNAc...) asparagine glycan is linked to asparagine 1299. A helical transmembrane segment spans residues 1391 to 1411; the sequence is GSLLAVIGIPIAVFLLATWFV. Topologically, residues 1412 to 1570 are cytoplasmic; that stretch reads YERGIRRNGG…ELQSATPEDN (159 aa). The segment at 1517–1570 is disordered; sequence EELEEGTNNINEDFNDEPNDYEYEEETNDEVDSRLFNIDDQSDEELQSATPEDN. 2 stretches are compositionally biased toward acidic residues: residues 1529-1546 and 1556-1570; these read DFNDEPNDYEYEEETNDE and DQSDEELQSATPEDN.

It belongs to the VPS10-related sortilin family.

It localises to the golgi apparatus. Its subcellular location is the trans-Golgi network membrane. It is found in the prevacuolar compartment membrane. In terms of biological role, functions as a sorting receptor in the Golgi compartment required for the intracellular sorting and delivery of soluble vacuolar proteins, like carboxypeptidase Y (CPY) and proteinase A. Executes multiple rounds of sorting by cycling between the late Golgi and a prevacuolar endosome-like compartment. This is Vacuolar protein sorting/targeting protein 10 (VPS10) from Debaryomyces hansenii (strain ATCC 36239 / CBS 767 / BCRC 21394 / JCM 1990 / NBRC 0083 / IGC 2968) (Yeast).